Here is a 489-residue protein sequence, read N- to C-terminus: MGGQCSSLSCCRNTSHKTAVLEAPDVDNGESSEITDVPNFREYTLEQLKAATSGFAVEYIVSEHGEKAPNVVYKGKLENQKKIAVKRFTRMAWPDSRQFLEEARSVGQLRSERMANLLGCCCEGDERLLVAEFMPNETLAKHLFHWETQPMKWTMRLRVVLYLAQALEYCTSKGRTLYHDLNAYRVLFDEECNPRLSTFGLMKNSRDGKSYSTNLAFTPPEYLRTGRITPESVIYSFGTLLLDLLSGKHIPPSHALDLIRDRNLQTLTDSCLDGQFSDSDGTELVRLASRCLQYEARERPNTKSLVTALTPLQKETEVLSHVLMGLPHSGSVSPLSPLGEACSRRDLTAMLEILEKLGYKDDEGVTNELSFHMWTDQMQESLNSKKKGDVAFRQKDFREAIECYTQFIDGGMISPTVCARRSLCYLMSDMPKEALDDAIQAQVISPVWHVASYLQSASLGILGMEKESQIALKEGSNLEAKMNGVPRVK.

G2 carries the N-myristoyl glycine lipid modification. A Protein kinase domain is found at 58-324 (EYIVSEHGEK…ETEVLSHVLM (267 aa)). ATP-binding positions include 64–72 (HGEKAPNVV) and K86. Catalysis depends on D180, which acts as the Proton acceptor. S212 bears the Phosphoserine mark.

The protein belongs to the protein kinase superfamily. Ser/Thr protein kinase family. In terms of assembly, interacts with BRI1. Phosphorylated by BRI1 upon brassinolide (BL) treatment. Phosphorylated by ASK7/BIN2 and ASK9/BIL2.

Its subcellular location is the cell membrane. It carries out the reaction L-seryl-[protein] + ATP = O-phospho-L-seryl-[protein] + ADP + H(+). The catalysed reaction is L-threonyl-[protein] + ATP = O-phospho-L-threonyl-[protein] + ADP + H(+). Its function is as follows. Probable serine/threonine kinase that acts as a positive regulator of brassinosteroid (BR) signaling downstream of the receptor kinase BRI1. Mediates signal transduction from BRI1 by functioning as substrate of BRI1. Functions redundantly with BSK4, BSK6, BSK7 and BSK8. The protein is Serine/threonine-protein kinase BSK3 of Arabidopsis thaliana (Mouse-ear cress).